A 162-amino-acid polypeptide reads, in one-letter code: Probable chemoreceptor glutamine deamidase CheD (162 aa).

The protein belongs to the CheD family.

It catalyses the reaction L-glutaminyl-[protein] + H2O = L-glutamyl-[protein] + NH4(+). Probably deamidates glutamine residues to glutamate on methyl-accepting chemotaxis receptors (MCPs), playing an important role in chemotaxis. The protein is Probable chemoreceptor glutamine deamidase CheD of Clostridium botulinum (strain Eklund 17B / Type B).